The primary structure comprises 387 residues: Succinate--CoA ligase [ADP-forming] subunit beta (387 aa).

The region spanning 9–244 (KQLFASYGLP…VSQEDDRENR (236 aa)) is the ATP-grasp domain. Residues Lys-46, 53–55 (GRG), Glu-99, Cys-102, and Glu-107 each bind ATP. Mg(2+) contacts are provided by Asn-199 and Asp-213. Substrate-binding positions include Asn-264 and 321–323 (GIV).

This sequence belongs to the succinate/malate CoA ligase beta subunit family. As to quaternary structure, heterotetramer of two alpha and two beta subunits. Mg(2+) serves as cofactor.

It carries out the reaction succinate + ATP + CoA = succinyl-CoA + ADP + phosphate. The enzyme catalyses GTP + succinate + CoA = succinyl-CoA + GDP + phosphate. It participates in carbohydrate metabolism; tricarboxylic acid cycle; succinate from succinyl-CoA (ligase route): step 1/1. Its function is as follows. Succinyl-CoA synthetase functions in the citric acid cycle (TCA), coupling the hydrolysis of succinyl-CoA to the synthesis of either ATP or GTP and thus represents the only step of substrate-level phosphorylation in the TCA. The beta subunit provides nucleotide specificity of the enzyme and binds the substrate succinate, while the binding sites for coenzyme A and phosphate are found in the alpha subunit. The chain is Succinate--CoA ligase [ADP-forming] subunit beta from Legionella pneumophila (strain Paris).